The primary structure comprises 143 residues: MSTPFQVYIVSPDRALFSGEVVQIVAPAEYGELGILSNHIPLIATLKPGQVRLTKSDGEEEVLYVSGGFIEVQSKQTIILADEAARAAELDEEKIKEAKARAEKLIKSPDGEINYERMKNYEKMQIELVQLTAQLAAIRRHRQ.

The protein belongs to the ATPase epsilon chain family. In terms of assembly, F-type ATPases have 2 components, CF(1) - the catalytic core - and CF(0) - the membrane proton channel. CF(1) has five subunits: alpha(3), beta(3), gamma(1), delta(1), epsilon(1). CF(0) has three main subunits: a, b and c.

The protein resides in the cell inner membrane. Produces ATP from ADP in the presence of a proton gradient across the membrane. This chain is ATP synthase epsilon chain, found in Dichelobacter nodosus (strain VCS1703A).